The sequence spans 350 residues: Uroporphyrinogen decarboxylase (350 aa).

Substrate is bound by residues 28-32 (RQAGR), Asp-78, Tyr-154, Thr-209, and His-325.

Belongs to the uroporphyrinogen decarboxylase family. Homodimer.

The protein localises to the cytoplasm. It catalyses the reaction uroporphyrinogen III + 4 H(+) = coproporphyrinogen III + 4 CO2. The protein operates within porphyrin-containing compound metabolism; protoporphyrin-IX biosynthesis; coproporphyrinogen-III from 5-aminolevulinate: step 4/4. In terms of biological role, catalyzes the decarboxylation of four acetate groups of uroporphyrinogen-III to yield coproporphyrinogen-III. In Nitrobacter hamburgensis (strain DSM 10229 / NCIMB 13809 / X14), this protein is Uroporphyrinogen decarboxylase.